The sequence spans 355 residues: Chorismate synthase (355 aa).

An NADP(+)-binding site is contributed by arginine 48. FMN contacts are provided by residues 125–127 (RSS), 238–239 (NA), glycine 278, 293–297 (KPASS), and arginine 319.

This sequence belongs to the chorismate synthase family. As to quaternary structure, homotetramer. FMNH2 is required as a cofactor.

It catalyses the reaction 5-O-(1-carboxyvinyl)-3-phosphoshikimate = chorismate + phosphate. Its pathway is metabolic intermediate biosynthesis; chorismate biosynthesis; chorismate from D-erythrose 4-phosphate and phosphoenolpyruvate: step 7/7. Its function is as follows. Catalyzes the anti-1,4-elimination of the C-3 phosphate and the C-6 proR hydrogen from 5-enolpyruvylshikimate-3-phosphate (EPSP) to yield chorismate, which is the branch point compound that serves as the starting substrate for the three terminal pathways of aromatic amino acid biosynthesis. This reaction introduces a second double bond into the aromatic ring system. The chain is Chorismate synthase from Baumannia cicadellinicola subsp. Homalodisca coagulata.